Consider the following 350-residue polypeptide: Chlorophyll a/b light-harvesting protein PcbA (350 aa).

Helical transmembrane passes span 26–46, 62–82, 87–107, 214–234, 248–268, and 309–329; these read LSAHIAQYALITFWAGGITLF, LILIPHLATLGWGIGSGGQVV, YFVIGVIHLVASAVFGAGALY, IAVVLLAGGFWHINQAPFPWA, LSASLAGLSMAGFAAAYFSAV, and LCNVHFFLAFFVLQGHLWHAL.

This sequence belongs to the PsbB/PsbC family. IsiA/Pcb subfamily. In terms of assembly, the antenna complex consists of chlorophylls (a and b) and chlorophyll a/b binding proteins. The cofactor is chlorophyll a. It depends on chlorophyll b as a cofactor.

The protein resides in the cellular thylakoid membrane. Its function is as follows. The antenna complex functions as a light receptor, it captures and delivers excitation energy to photosystems II and I. The Prochlorales pcb genes are not related to higher plant LHCs. This chain is Chlorophyll a/b light-harvesting protein PcbA (pcbA), found in Prochlorothrix hollandica.